Here is a 173-residue protein sequence, read N- to C-terminus: Large ribosomal subunit protein uL10 (173 aa).

Belongs to the universal ribosomal protein uL10 family. In terms of assembly, part of the ribosomal stalk of the 50S ribosomal subunit. The N-terminus interacts with L11 and the large rRNA to form the base of the stalk. The C-terminus forms an elongated spine to which L12 dimers bind in a sequential fashion forming a multimeric L10(L12)X complex.

Its function is as follows. Forms part of the ribosomal stalk, playing a central role in the interaction of the ribosome with GTP-bound translation factors. The polypeptide is Large ribosomal subunit protein uL10 (rplJ) (Synechocystis sp. (strain ATCC 27184 / PCC 6803 / Kazusa)).